Here is a 351-residue protein sequence, read N- to C-terminus: Protein-glutamate methylesterase/protein-glutamine glutaminase 2 (351 aa).

The Response regulatory domain maps to 4-121; sequence KVLVVDDSAL…PQDFNEYQDL (118 aa). At Asp-55 the chain carries 4-aspartylphosphate. The 193-residue stretch at 156–348 folds into the CheB-type methylesterase domain; it reads RVINTQLVAI…DKMLNYLASL (193 aa). Catalysis depends on residues Ser-168, His-194, and Asp-290.

This sequence belongs to the CheB family. Post-translationally, phosphorylated by CheA. Phosphorylation of the N-terminal regulatory domain activates the methylesterase activity.

Its subcellular location is the cytoplasm. It catalyses the reaction [protein]-L-glutamate 5-O-methyl ester + H2O = L-glutamyl-[protein] + methanol + H(+). It carries out the reaction L-glutaminyl-[protein] + H2O = L-glutamyl-[protein] + NH4(+). Involved in chemotaxis. Part of a chemotaxis signal transduction system that modulates chemotaxis in response to various stimuli. Catalyzes the demethylation of specific methylglutamate residues introduced into the chemoreceptors (methyl-accepting chemotaxis proteins or MCP) by CheR. Also mediates the irreversible deamidation of specific glutamine residues to glutamic acid. The chain is Protein-glutamate methylesterase/protein-glutamine glutaminase 2 from Shewanella sp. (strain MR-7).